We begin with the raw amino-acid sequence, 371 residues long: Regulatory protein RapK (371 aa).

TPR repeat units lie at residues glutamate 7–methionine 42, glutamate 93–glutamate 130, alanine 175–threonine 208, alanine 215–leucine 248, isoleucine 254–lysine 290, and aspartate 331–methionine 364.

Belongs to the Rap family.

It is found in the cytoplasm. With respect to regulation, inhibited by PhrK, which prevents RapK-ComA interaction. In terms of biological role, involved in the regulation of genetic competence development. Inhibits the activity of ComA, a transcriptional factor that regulates the development of genetic competence. Likely affects the activity of additional regulators, in particular Spo0A. The protein is Regulatory protein RapK (rapK) of Bacillus subtilis (strain 168).